Here is a 132-residue protein sequence, read N- to C-terminus: Sodium/calcium exchanger regulatory protein 1 (132 aa).

Residues Arg126 and Tyr128 each contribute to the (9Z)-hexadecenoate site.

This sequence belongs to the calycin superfamily. Fatty-acid binding protein (FABP) family. In terms of assembly, interacts with Na(+)/Ca(2+) exchanger NCXSQ1; ReP1-NCXSQ phosphorylation does not affect the interaction. In terms of processing, phosphorylated. Phosphorylation may result in the release of the bound fatty acid. Expressed in the optic nerve (at protein level).

Its subcellular location is the cytoplasm. The protein localises to the membrane. Binds and may transport fatty acids such as palmitoleate. Also binds poly-phosphoinositides including phosphatidylinositol 4-phosphate (PtdIns(4)P), phosphatidylinositol 4,5-bisphosphate (PtdIns(4,5)P2) and phosphatidylinositol 3,4,5-trisphosphate (PtdIns(3,4,5)P3), and phosphatidic acid. When phosphorylated, stimulates the activity of optic nerve Na(+)/Ca(2+) exchanger. The protein is Sodium/calcium exchanger regulatory protein 1 of Doryteuthis pealeii (Longfin inshore squid).